The sequence spans 328 residues: Olfactory receptor 2AJ1 (328 aa).

The Extracellular segment spans residues 1 to 25 (MGHQNHTFSSDFILLGLFSSSPTSV). N-linked (GlcNAc...) asparagine glycosylation occurs at Asn5. Residues 26–49 (VFFLVLFVIFIMSVTENTLMILLI) traverse the membrane as a helical segment. At 50-57 (RSDSRLHT) the chain is on the cytoplasmic side. A helical membrane pass occupies residues 58-79 (PMYFLLSHLSLMDILHVSNIVP). Residues 80–100 (KMVTNFLSGSRTISFAGCGFQ) are Extracellular-facing. Cys97 and Cys189 form a disulfide bridge. A helical transmembrane segment spans residues 101 to 120 (VFLSLTLLGGECLLLAAMSC). Over 121–139 (DRYVAICHPLRYPILMKEY) the chain is Cytoplasmic. The helical transmembrane segment at 140 to 158 (ASALMAGGSWLIGVFNSTV) threads the bilayer. Residues 159–195 (HTAYALQFPFCGSRAIDHFFCEVPAMLKLSCADTTRY) are Extracellular-facing. Residues 196-219 (ERGVCVSAVIFLLIPFSLISASYG) form a helical membrane-spanning segment. Residues 220-236 (QIILTVLQMKSSEARKK) lie on the Cytoplasmic side of the membrane. Residues 237 to 259 (SFSTCSFHMIVVTMYYGPFIFTY) traverse the membrane as a helical segment. Topologically, residues 260–272 (MRPKSYHTPGQDK) are extracellular. The helical transmembrane segment at 273–292 (FLAIFYTILTPTLNPFIYSF) threads the bilayer. The Cytoplasmic segment spans residues 293–328 (RNKDVLAVMKNMLKSNFLHKKMNRKIPECVFCLFLC).

This sequence belongs to the G-protein coupled receptor 1 family.

The protein resides in the cell membrane. Odorant receptor. This chain is Olfactory receptor 2AJ1 (OR2AJ1), found in Homo sapiens (Human).